We begin with the raw amino-acid sequence, 690 residues long: Potassium-transporting ATPase ATP-binding subunit (690 aa).

Helical transmembrane passes span 49 to 69, 72 to 92, 229 to 249, and 253 to 273; these read SPVMLVVELTAVLTTLLCFVP, AVPTSVALQIALWLWFTVLFA, VALDILLIGLTLIFLLVVVTL, and ALFAGGNLPLVFLVALLVTLI. The active-site 4-aspartylphosphate intermediate is D317. ATP contacts are provided by residues D354, E358, 385 to 392, and K403; that span reads FSAETRLS. Residues D526 and D530 each contribute to the Mg(2+) site. 3 consecutive transmembrane segments (helical) span residues 596-616, 624-644, and 662-682; these read FAILPALFVGIYPQLDVLNVM, AILSAIVFNALIIVALIPLAL, and LLIYGVGGLVAPFLGIKAIDL.

It belongs to the cation transport ATPase (P-type) (TC 3.A.3) family. Type IA subfamily. The system is composed of three essential subunits: KdpA, KdpB and KdpC.

The protein resides in the cell inner membrane. The enzyme catalyses K(+)(out) + ATP + H2O = K(+)(in) + ADP + phosphate + H(+). Its function is as follows. Part of the high-affinity ATP-driven potassium transport (or Kdp) system, which catalyzes the hydrolysis of ATP coupled with the electrogenic transport of potassium into the cytoplasm. This subunit is responsible for energy coupling to the transport system and for the release of the potassium ions to the cytoplasm. This is Potassium-transporting ATPase ATP-binding subunit from Pseudomonas aeruginosa (strain ATCC 15692 / DSM 22644 / CIP 104116 / JCM 14847 / LMG 12228 / 1C / PRS 101 / PAO1).